The primary structure comprises 338 residues: Fructose-1,6-bisphosphatase class 1 (338 aa).

Residues glutamate 91, aspartate 113, leucine 115, and aspartate 116 each contribute to the Mg(2+) site. Substrate contacts are provided by residues 116 to 119 (DGSS), asparagine 208, and lysine 274. Glutamate 280 serves as a coordination point for Mg(2+).

This sequence belongs to the FBPase class 1 family. In terms of assembly, homotetramer. Requires Mg(2+) as cofactor.

The protein resides in the cytoplasm. The enzyme catalyses beta-D-fructose 1,6-bisphosphate + H2O = beta-D-fructose 6-phosphate + phosphate. It participates in carbohydrate biosynthesis; gluconeogenesis. This Ralstonia nicotianae (strain ATCC BAA-1114 / GMI1000) (Ralstonia solanacearum) protein is Fructose-1,6-bisphosphatase class 1.